Reading from the N-terminus, the 459-residue chain is D(1)-like dopamine receptor (459 aa).

The Extracellular portion of the chain corresponds to 1–23; sequence MAQNFSTVGDGKQMLLERDSSKR. The N-linked (GlcNAc...) asparagine glycan is linked to Asn-4. Residues 24-49 form a helical membrane-spanning segment; sequence VLTGCFLSLLIFTTLLGNTLVCVAVT. The Cytoplasmic segment spans residues 50–60; it reads KFRHLRSKVTN. The chain crosses the membrane as a helical span at residues 61 to 87; it reads FFVISLAISDLLVAILVMPWKAATEIM. The Extracellular segment spans residues 88–96; that stretch reads GFWPFGEFC. Cys-96 and Cys-187 are oxidised to a cystine. A helical transmembrane segment spans residues 97–119; it reads NIWVAFDIMCSTASILNLCVISV. At 120–138 the chain is on the cytoplasmic side; the sequence is DRYWAISSPFRYERKMTPK. The helical transmembrane segment at 139–164 threads the bilayer; sequence VACLMISVAWTLSVLISFIPVQLNWH. Residues 165 to 191 lie on the Extracellular side of the membrane; the sequence is KAQTASYVELNGTYAGDLPPDNCDSSL. Residues 192–216 form a helical membrane-spanning segment; it reads NRTYAISSSLISFYIPVAIMIVTYT. Residues 217 to 269 are Cytoplasmic-facing; the sequence is RIYRIAQKQIRRISALERAAESAQNRHSSMGNSLSMESECSFKMSFKRETKVL. A helical membrane pass occupies residues 270-297; sequence KTLSVIMGVFVCCWLPFFILNCMVPFCE. At 298–311 the chain is on the extracellular side; the sequence is ADDTTDFPCISSTT. The chain crosses the membrane as a helical span at residues 312–333; sequence FDVFVWFGWANSSLNPIIYAFN. Over 334 to 459 the chain is Cytoplasmic; it reads ADFRKAFSIL…QNGQHKSMSC (126 aa).

Belongs to the G-protein coupled receptor 1 family.

The protein localises to the cell membrane. Its subcellular location is the cell projection. The protein resides in the cilium membrane. In terms of biological role, receptor for dopamine. The sequence is that of D(1)-like dopamine receptor (d14) from Takifugu rubripes (Japanese pufferfish).